Consider the following 284-residue polypeptide: Steroidogenic acute regulatory protein, mitochondrial (284 aa).

The N-terminal 62 residues, 1-62, are a transit peptide targeting the mitochondrion; that stretch reads MLLATFKLCA…RRSSLLGSQL (62 aa). Ser56 and Ser194 each carry phosphoserine; by PKA. An START domain is found at 66–279; that stretch reads LYSDQELSYI…LRKRLESSPA (214 aa).

As to quaternary structure, may interact with TSPO.

Its subcellular location is the mitochondrion. It catalyses the reaction cholesterol(in) = cholesterol(out). The protein operates within steroid metabolism; cholesterol metabolism. Its function is as follows. Plays a key role in steroid hormone synthesis by enhancing the metabolism of cholesterol into pregnenolone. Mediates the transfer of cholesterol from the outer mitochondrial membrane to the inner mitochondrial membrane where it is cleaved to pregnenolone. This Rattus norvegicus (Rat) protein is Steroidogenic acute regulatory protein, mitochondrial (Star).